Consider the following 34-residue polypeptide: Turripeptide Pal9a (34 aa).

Disulfide bonds link cysteine 3/cysteine 17, cysteine 8/cysteine 19, and cysteine 13/cysteine 30. Glutamine 34 is subject to Glutamine amide.

Expressed by the venom duct.

The protein localises to the secreted. The sequence is that of Turripeptide Pal9a from Polystira albida (White giant-turris).